The chain runs to 404 residues: Phosphoglycerate kinase (404 aa).

Substrate-binding positions include 21 to 23 (DFN), Arg-38, 61 to 64 (HLGR), Arg-126, and Arg-159. Residues Lys-210, Glu-333, and 360–363 (GGDS) each bind ATP.

This sequence belongs to the phosphoglycerate kinase family. Monomer.

Its subcellular location is the cytoplasm. It catalyses the reaction (2R)-3-phosphoglycerate + ATP = (2R)-3-phospho-glyceroyl phosphate + ADP. It functions in the pathway carbohydrate degradation; glycolysis; pyruvate from D-glyceraldehyde 3-phosphate: step 2/5. This chain is Phosphoglycerate kinase, found in Acidobacterium capsulatum (strain ATCC 51196 / DSM 11244 / BCRC 80197 / JCM 7670 / NBRC 15755 / NCIMB 13165 / 161).